Consider the following 319-residue polypeptide: ADP-L-glycero-D-manno-heptose-6-epimerase (319 aa).

Residues 10 to 11 (FI), 31 to 32 (DD), K38, K53, and 75 to 79 (EGACS) contribute to the NADP(+) site. Y139 serves as the catalytic Proton acceptor. K143 is an NADP(+) binding site. Position 168 (N168) interacts with substrate. NADP(+) contacts are provided by V169 and K177. The active-site Proton acceptor is the K177. Substrate is bound by residues S179, H186, 200–203 (FEGA), R213, and Y281.

Belongs to the NAD(P)-dependent epimerase/dehydratase family. HldD subfamily. As to quaternary structure, homopentamer. The cofactor is NADP(+).

The enzyme catalyses ADP-D-glycero-beta-D-manno-heptose = ADP-L-glycero-beta-D-manno-heptose. The protein operates within nucleotide-sugar biosynthesis; ADP-L-glycero-beta-D-manno-heptose biosynthesis; ADP-L-glycero-beta-D-manno-heptose from D-glycero-beta-D-manno-heptose 7-phosphate: step 4/4. Functionally, catalyzes the interconversion between ADP-D-glycero-beta-D-manno-heptose and ADP-L-glycero-beta-D-manno-heptose via an epimerization at carbon 6 of the heptose. The polypeptide is ADP-L-glycero-D-manno-heptose-6-epimerase (Aromatoleum aromaticum (strain DSM 19018 / LMG 30748 / EbN1) (Azoarcus sp. (strain EbN1))).